Reading from the N-terminus, the 324-residue chain is Probable pectinesterase A (324 aa).

An N-terminal signal peptide occupies residues 1-19 (MHLPSLVLGLLGLGLTASA). A glycan (N-linked (GlcNAc...) asparagine) is linked at asparagine 27. Glutamine 142 serves as a coordination point for substrate. Aspartate 165 functions as the Proton donor in the catalytic mechanism. Aspartate 186 serves as the catalytic Nucleophile. Asparagine 191 is a glycosylation site (N-linked (GlcNAc...) asparagine). Residues arginine 246 and tryptophan 248 each coordinate substrate.

It belongs to the pectinesterase family.

The protein resides in the secreted. It carries out the reaction [(1-&gt;4)-alpha-D-galacturonosyl methyl ester](n) + n H2O = [(1-&gt;4)-alpha-D-galacturonosyl](n) + n methanol + n H(+). It participates in glycan metabolism; pectin degradation; 2-dehydro-3-deoxy-D-gluconate from pectin: step 1/5. Involved in maceration and soft-rotting of plant tissue. In Neosartorya fischeri (strain ATCC 1020 / DSM 3700 / CBS 544.65 / FGSC A1164 / JCM 1740 / NRRL 181 / WB 181) (Aspergillus fischerianus), this protein is Probable pectinesterase A (pmeA).